The chain runs to 891 residues: Alanine--tRNA ligase (891 aa).

His-576, His-580, Cys-684, and His-688 together coordinate Zn(2+).

It belongs to the class-II aminoacyl-tRNA synthetase family. The cofactor is Zn(2+).

Its subcellular location is the cytoplasm. It catalyses the reaction tRNA(Ala) + L-alanine + ATP = L-alanyl-tRNA(Ala) + AMP + diphosphate. Functionally, catalyzes the attachment of alanine to tRNA(Ala) in a two-step reaction: alanine is first activated by ATP to form Ala-AMP and then transferred to the acceptor end of tRNA(Ala). Also edits incorrectly charged Ser-tRNA(Ala) and Gly-tRNA(Ala) via its editing domain. The chain is Alanine--tRNA ligase from Orientia tsutsugamushi (strain Boryong) (Rickettsia tsutsugamushi).